We begin with the raw amino-acid sequence, 568 residues long: Protein KATNIP homolog (568 aa).

Over residues 1-20 the composition is skewed to basic and acidic residues; it reads MSDSDLKEIEKNAENIKLEP. A disordered region spans residues 1–30; the sequence is MSDSDLKEIEKNAENIKLEPAEDEVNEEDQ. Acidic residues predominate over residues 21–30; it reads AEDEVNEEDQ.

As to expression, expressed in most ciliated neuronal cells. Not expressed in non-ciliated cells.

Its subcellular location is the cytoplasm. The protein resides in the cytoskeleton. The protein localises to the cilium axoneme. It is found in the cilium basal body. Its function is as follows. May regulate ciliary A-tubule number and, along with arl-13, controls cilium integrity. The polypeptide is Protein KATNIP homolog (Caenorhabditis elegans).